The sequence spans 93 residues: Small ribosomal subunit protein bS18 (93 aa).

It belongs to the bacterial ribosomal protein bS18 family. In terms of assembly, part of the 30S ribosomal subunit. Forms a tight heterodimer with protein bS6.

In terms of biological role, binds as a heterodimer with protein bS6 to the central domain of the 16S rRNA, where it helps stabilize the platform of the 30S subunit. This chain is Small ribosomal subunit protein bS18, found in Acidovorax ebreus (strain TPSY) (Diaphorobacter sp. (strain TPSY)).